Here is a 287-residue protein sequence, read N- to C-terminus: Serine/arginine-rich SC35-like splicing factor SCL33 (287 aa).

A disordered region spans residues 1 to 34 (MRGRSYTPSPPRGYGRRGRSPSPRGRYGGRSRDL). 2 positions are modified to phosphoserine: serine 9 and serine 20. The region spanning 36-114 (TSLLVRNLRH…RELTVVFAEE (79 aa)) is the RRM domain. Residues 116-132 (RKKPTEMRARERGGGRF) show a composition bias toward basic and acidic residues. The segment at 116–287 (RKKPTEMRAR…QYDEDRSPSQ (172 aa)) is disordered. A phosphoserine mark is found at serine 165, serine 175, serine 177, serine 188, and serine 190. The segment covering 177-187 (SPREERYDGRR) has biased composition (basic and acidic residues). Basic residues predominate over residues 220–237 (SISRSPRRSRSPSPKRNR). Phosphoserine occurs at positions 238, 248, 271, 284, and 286. Residues 244–260 (SISRSPRRSRSPRRSRR) are compositionally biased toward basic residues. Over residues 278-287 (QYDEDRSPSQ) the composition is skewed to basic and acidic residues.

This sequence belongs to the splicing factor SR family. SCL subfamily. As to quaternary structure, component of the spliceosome. Homodimer. Interacts with AFC2, CYP59, RS2Z33, RNU1 and SR45. The interaction with AFC2 depends on phosphorylation status. Post-translationally, phosphorylated by AFC2. Ubiquitous. Mostly expressed in roots, fruits and flowers, and, to a lower extent, in leaves.

The protein resides in the nucleus speckle. The protein localises to the nucleus. It localises to the nucleoplasm. Its subcellular location is the cytoplasm. In terms of biological role, involved in intron recognition and spliceosome assembly. Binds to multiple 5'-GAAG-3' repeats found in its third intron, suggesting autoregulation of alternative splicing. May be necessary for accurate splicing of the 3' region of introns. In Arabidopsis thaliana (Mouse-ear cress), this protein is Serine/arginine-rich SC35-like splicing factor SCL33 (SCL33).